Here is a 410-residue protein sequence, read N- to C-terminus: Chloride intracellular channel protein 5 (410 aa).

The G-site signature appears at 191 to 194; the sequence is CPFS. A helical transmembrane segment spans residues 193-213; sequence FSQRLFMILWLKGVVFNVTTV. Residues 260 to 400 enclose the GST C-terminal domain; it reads YPKLAAKHRE…AADSEIELAY (141 aa).

The protein belongs to the chloride channel CLIC family. As to quaternary structure, component of a multimeric complex consisting of several cytoskeletal proteins, including actin, ezrin, alpha-actinin, gelsolin, and IQGAP1. Interacts with AKAP9. Interacts with TPRN. TPRN, CLIC5 and PTPQR form concentric rings at the base of stereocilia and may form a complex. Interacts with EZR, MYO6 and RDX; the proteins may work together as a complex to stabilize linkages between the plasma membrane and subjacent actin cytoskeleton at the stereocilium base. As to expression, widely expressed in both fetal and adult human tissues. Isoform 1 is expressed in renal glomeruli endothelial cells and podocytes (at protein level).

It localises to the cytoplasm. Its subcellular location is the cytoskeleton. The protein localises to the cell cortex. It is found in the membrane. The protein resides in the apical cell membrane. It localises to the mitochondrion. Its subcellular location is the cell projection. The protein localises to the stereocilium. It is found in the golgi apparatus. The protein resides in the microtubule organizing center. It localises to the centrosome. It carries out the reaction chloride(in) = chloride(out). The enzyme catalyses Na(+)(in) = Na(+)(out). The catalysed reaction is K(+)(in) = K(+)(out). With respect to regulation, inhibited by F-actin. Its function is as follows. In the soluble state, catalyzes glutaredoxin-like thiol disulfide exchange reactions with reduced glutathione as electron donor. Can insert into membranes and form non-selective ion channels almost equally permeable to Na(+), K(+) and Cl(-). Required for normal hearing. It is necessary for the formation of stereocilia in the inner ear and normal development of the organ of Corti. May play a role in the regulation of transepithelial ion absorption and secretion. Is required for the development and/or maintenance of the proper glomerular endothelial cell and podocyte architecture. Plays a role in formation of the lens suture in the eye, which is important for normal optical properties of the lens. The polypeptide is Chloride intracellular channel protein 5 (Homo sapiens (Human)).